The sequence spans 310 residues: 4-hydroxyproline 2-epimerase (310 aa).

Residue cysteine 88 is the Proton acceptor of the active site. Residues 89–90 (GH), histidine 208, and aspartate 232 each bind substrate. Cysteine 236 acts as the Proton donor in catalysis. Residue 237 to 238 (GT) participates in substrate binding.

Belongs to the proline racemase family.

The enzyme catalyses trans-4-hydroxy-L-proline = cis-4-hydroxy-D-proline. In terms of biological role, catalyzes the epimerization of trans-4-hydroxy-L-proline (t4LHyp) to cis-4-hydroxy-D-proline (c4DHyp). Is likely involved in a degradation pathway that converts t4LHyp to alpha-ketoglutarate. Can also catalyze the dehydration of trans-3-hydroxy-L-proline (t3LHyp) to Delta(1)-pyrroline-2-carboxylate (Pyr2C), albeit with 42-fold lower efficiency. Displays no proline racemase activity. This chain is 4-hydroxyproline 2-epimerase, found in Burkholderia thailandensis (strain ATCC 700388 / DSM 13276 / CCUG 48851 / CIP 106301 / E264).